A 272-amino-acid chain; its full sequence is F-actin-capping protein subunit beta (272 aa).

This sequence belongs to the F-actin-capping protein beta subunit family. In terms of assembly, component of the F-actin capping complex, composed of a heterodimer of an alpha and a beta subunit.

Its subcellular location is the cytoplasm. The protein resides in the cytoskeleton. In terms of biological role, F-actin-capping proteins bind in a Ca(2+)-independent manner to the fast growing ends of actin filaments (barbed end) thereby blocking the exchange of subunits at these ends. Unlike other capping proteins (such as gelsolin and severin), these proteins do not sever actin filaments. This is F-actin-capping protein subunit beta (acpA) from Dictyostelium discoideum (Social amoeba).